The primary structure comprises 283 residues: Formamidopyrimidine-DNA glycosylase (283 aa).

The Schiff-base intermediate with DNA role is filled by Pro2. Glu3 serves as the catalytic Proton donor. Lys58 (proton donor; for beta-elimination activity) is an active-site residue. Positions 100, 119, and 162 each coordinate DNA. An FPG-type zinc finger spans residues 247 to 283 (RVYGREGLPCVTPGCSGTVGRIVQSGRSSFHCPLCQR). Arg273 functions as the Proton donor; for delta-elimination activity in the catalytic mechanism.

This sequence belongs to the FPG family. In terms of assembly, monomer. The cofactor is Zn(2+).

The catalysed reaction is Hydrolysis of DNA containing ring-opened 7-methylguanine residues, releasing 2,6-diamino-4-hydroxy-5-(N-methyl)formamidopyrimidine.. It catalyses the reaction 2'-deoxyribonucleotide-(2'-deoxyribose 5'-phosphate)-2'-deoxyribonucleotide-DNA = a 3'-end 2'-deoxyribonucleotide-(2,3-dehydro-2,3-deoxyribose 5'-phosphate)-DNA + a 5'-end 5'-phospho-2'-deoxyribonucleoside-DNA + H(+). Functionally, involved in base excision repair of DNA damaged by oxidation or by mutagenic agents. Acts as a DNA glycosylase that recognizes and removes damaged bases. Has a preference for oxidized purines, such as 7,8-dihydro-8-oxoguanine (8-oxoG). Has AP (apurinic/apyrimidinic) lyase activity and introduces nicks in the DNA strand. Cleaves the DNA backbone by beta-delta elimination to generate a single-strand break at the site of the removed base with both 3'- and 5'-phosphates. The polypeptide is Formamidopyrimidine-DNA glycosylase (Cereibacter sphaeroides (strain KD131 / KCTC 12085) (Rhodobacter sphaeroides)).